We begin with the raw amino-acid sequence, 1010 residues long: MTKHPPNRRGISFEVGAQLEARDRLKNWYPAHIEDIDYEEGRVLIHFKRWNHRYDEWFCWDSPYLRPLEKIQLRKEGLHDEDGSSEFQINQQVLACWSDCRFYPARVTAVNKDGTYTVKFYDGVVQTVKHIHVKAFSKDQNIVGNARPKETDHKSLSSSPEKREKFKEQRKVTVNVKKDKVEKALKTEKRPKQPDKEGKLICSEKGKVSEKSLPKNEKEDKENISENEREYSGDAQVEKKPEKDLVKNPQENLKEPKRKRGRPPSITPTAVDSNSQTLQPITLELRRRKISKRSDTPLKRPRLDKNSPQEQSKKRSENSDKDLSRRRSSRLSTNGTREILDPDSIVPDLVHTVDTNPLPDKSPSAKDSAEGQLKSPLEAGQVSSALTCHPIGDGLGAADLELNCKSMGENTMKTEPVSPLAEVQEVSTVEVPNTLKKVDDSVTLNVPAVDLDHKFRCKVLDCLKFFRKAKLLHYHMKYFHGMEKSPEPEEGPGKTHVQTRGSAVPDKTSQESLTRKRVSASSPTAKEKEKTKEKKFKELVRVKPKKKKKKKKKTKPECPCSEDISDTSQEPSPPKTFAVTRCGSSHKPGVHMSPQLHGSDNGNHKGKLKTCEEDNLSESSSESFLWSDEEYGQDVDVTTNPDEELEGDDRYDFEVVRCICEVQEENDFMIQCEECQCWQHGVCMGLLEENVPEKYTCYVCQDPPGQRPGFKYWYDKEWLSRGHMHGLAFLDQNYSHQNARKIVATHQLLGDVQRVIQVLHGLQLKMSILQSREHPDLQLWCQPWKQHSGEGRAHPRHIHITDARSEESPSYRTLNGAVEKPSPLPRSVEESYITSEHCYQKPRAYYPAVEQRLVVETRGSALDAAVSPLCENGDDSLSPRLGWPIDQDRSRGDIDPKPSSPKVREYISKNVLPEETPARKLLDRGGEGLVSSQHQWQFNLLTHVESLQDEVTHRMDSIEKELDVLESWLDYTGELEPPEPLARLPQLKHCIKQLLTDLGKVQQIALCCST.

Tudor domains are found at residues 4–69 (HPPN…RPLE) and 83–147 (GSSE…GNAR). Disordered stretches follow at residues 142–373 (IVGN…EGQL) and 483–609 (EKSP…GKLK). Basic and acidic residues predominate over residues 147–246 (RPKETDHKSL…VEKKPEKDLV (100 aa)). Position 159 is a phosphoserine (Ser-159). A DNA-binding region (a.T hook) is located at residues 257–269 (KRKRGRPPSITPT). The span at 267 to 280 (TPTAVDSNSQTLQP) shows a compositional bias: polar residues. 3 stretches are compositionally biased toward basic and acidic residues: residues 292–325 (KRSDTPLKRPRLDKNSPQEQSKKRSENSDKDLSR), 483–493 (EKSPEPEEGPG), and 525–541 (AKEKEKTKEKKFKELVR). A C2H2-type zinc finger spans residues 455 to 485 (FRCKVLDCLKFFRKAKLLHYHMKYFHGMEKS). The segment covering 542–554 (VKPKKKKKKKKKT) has biased composition (basic residues). The PHD-type zinc-finger motif lies at 657-703 (RCICEVQEENDFMIQCEECQCWQHGVCMGLLEENVPEKYTCYVCQDP). Residues 804-827 (RSEESPSYRTLNGAVEKPSPLPRS) are disordered. Lys-841 is modified (N6-acetyllysine). Phosphoserine occurs at positions 876 and 878. Positions 877 to 902 (LSPRLGWPIDQDRSRGDIDPKPSSPK) are disordered. Positions 886–902 (DQDRSRGDIDPKPSSPK) are enriched in basic and acidic residues.

Homodimer; disulfide-linked. Component of some MLL1/MLL complex, at least composed of the core components KMT2A/MLL1, ASH2L, HCFC1, WDR5 and RBBP5, as well as the facultative components BACC1, CHD8, E2F6, HSP70, INO80C, KANSL1, LAS1L, MAX, MCRS1, MGA, MYST1/MOF, PELP1, PHF20, PRP31, RING2, RUVB1/TIP49A, RUVB2/TIP49B, SENP3, TAF1, TAF4, TAF6, TAF7, TAF9 and TEX10. Component of the NSL complex at least composed of MOF/KAT8, KANSL1, KANSL2, KANSL3, MCRS1, PHF20, OGT1/OGT, WDR5 and HCFC1. In terms of processing, ubiquitinated by TRIM26; leading to proteasomal degradation.

The protein resides in the nucleus. Its function is as follows. Contributes to methyllysine-dependent p53/TP53 stabilization and up-regulation after DNA damage. Methyllysine-binding protein, component of the MOF histone acetyltransferase protein complex. Not required for maintaining the global histone H4 'Lys-16' acetylation (H4K16ac) levels or locus specific histone acetylation, but instead works downstream in transcriptional regulation of MOF target genes. As part of the NSL complex it may be involved in acetylation of nucleosomal histone H4 on several lysine residues. The polypeptide is PHD finger protein 20 (Phf20) (Mus musculus (Mouse)).